The primary structure comprises 206 residues: Thymidylate kinase (206 aa).

An ATP-binding site is contributed by glycine 11–threonine 18.

This sequence belongs to the thymidylate kinase family.

The catalysed reaction is dTMP + ATP = dTDP + ADP. Functionally, phosphorylation of dTMP to form dTDP in both de novo and salvage pathways of dTTP synthesis. This Burkholderia vietnamiensis (strain G4 / LMG 22486) (Burkholderia cepacia (strain R1808)) protein is Thymidylate kinase.